The following is a 247-amino-acid chain: 1-(5-phosphoribosyl)-5-[(5-phosphoribosylamino)methylideneamino] imidazole-4-carboxamide isomerase (247 aa).

Catalysis depends on D8, which acts as the Proton acceptor. D131 functions as the Proton donor in the catalytic mechanism.

It belongs to the HisA/HisF family.

It is found in the cytoplasm. It carries out the reaction 1-(5-phospho-beta-D-ribosyl)-5-[(5-phospho-beta-D-ribosylamino)methylideneamino]imidazole-4-carboxamide = 5-[(5-phospho-1-deoxy-D-ribulos-1-ylimino)methylamino]-1-(5-phospho-beta-D-ribosyl)imidazole-4-carboxamide. The protein operates within amino-acid biosynthesis; L-histidine biosynthesis; L-histidine from 5-phospho-alpha-D-ribose 1-diphosphate: step 4/9. The chain is 1-(5-phosphoribosyl)-5-[(5-phosphoribosylamino)methylideneamino] imidazole-4-carboxamide isomerase from Ralstonia pickettii (strain 12J).